The chain runs to 87 residues: UPF0250 protein Ent638_1166 (87 aa).

Belongs to the UPF0250 family.

The sequence is that of UPF0250 protein Ent638_1166 from Enterobacter sp. (strain 638).